An 87-amino-acid chain; its full sequence is U3-theraphotoxin-Hhn1a 13 (87 aa).

An N-terminal signal peptide occupies residues 1-24 (MVNMKASMFLTSAGLVPLFVVCYA). A propeptide spanning residues 25–52 (SESEEKEFPKEMLSSIFAVDNDFKQEER) is cleaved from the precursor. 3 disulfides stabilise this stretch: C54/C67, C61/C72, and C66/C79.

Belongs to the neurotoxin 10 (Hwtx-1) family. 51 (Hntx-8) subfamily. Hntx-8 sub-subfamily. As to expression, expressed by the venom gland.

Its subcellular location is the secreted. Ion channel inhibitor. This Cyriopagopus hainanus (Chinese bird spider) protein is U3-theraphotoxin-Hhn1a 13.